The chain runs to 351 residues: Probable dual-specificity RNA methyltransferase RlmN (351 aa).

The Proton acceptor role is filled by Glu-98. A Radical SAM core domain is found at 104 to 332; the sequence is TQKRLTVCVS…ASIRRSRGLD (229 aa). An intrachain disulfide couples Cys-111 to Cys-337. Residues Cys-118, Cys-122, and Cys-125 each contribute to the [4Fe-4S] cluster site. Residues 165 to 166, Ser-195, 218 to 220, and Asn-294 each bind S-adenosyl-L-methionine; these read GE and SLH. The active-site S-methylcysteine intermediate is the Cys-337.

Belongs to the radical SAM superfamily. RlmN family. It depends on [4Fe-4S] cluster as a cofactor.

The protein resides in the cytoplasm. It catalyses the reaction adenosine(2503) in 23S rRNA + 2 reduced [2Fe-2S]-[ferredoxin] + 2 S-adenosyl-L-methionine = 2-methyladenosine(2503) in 23S rRNA + 5'-deoxyadenosine + L-methionine + 2 oxidized [2Fe-2S]-[ferredoxin] + S-adenosyl-L-homocysteine. The catalysed reaction is adenosine(37) in tRNA + 2 reduced [2Fe-2S]-[ferredoxin] + 2 S-adenosyl-L-methionine = 2-methyladenosine(37) in tRNA + 5'-deoxyadenosine + L-methionine + 2 oxidized [2Fe-2S]-[ferredoxin] + S-adenosyl-L-homocysteine. Its function is as follows. Specifically methylates position 2 of adenine 2503 in 23S rRNA and position 2 of adenine 37 in tRNAs. The sequence is that of Probable dual-specificity RNA methyltransferase RlmN from Acaryochloris marina (strain MBIC 11017).